The primary structure comprises 767 residues: Dipeptidyl peptidase 4 (767 aa).

Residues 1-6 (MKTPWK) lie on the Cytoplasmic side of the membrane. A helical; Signal-anchor for type II membrane protein membrane pass occupies residues 7–28 (VLLGLLGVAALVTIITVPVVLL). Topologically, residues 29–767 (NKDEAAADSR…HFLQQCFSLR (739 aa)) are extracellular. N-linked (GlcNAc...) asparagine glycosylation is found at N83, N90, N148, N217, N227, and N319. Cystine bridges form between C326-C337, C383-C395, C445-C448, and C455-C473. N-linked (GlcNAc...) asparagine glycosylation is present at N521. The active-site Charge relay system is S631. The cysteines at positions 650 and 763 are disulfide-linked. The N-linked (GlcNAc...) asparagine glycan is linked to N686. Active-site charge relay system residues include D709 and H741.

This sequence belongs to the peptidase S9B family. DPPIV subfamily. In terms of assembly, monomer. Homodimer. Heterodimer with Seprase (FAP). Requires homodimerization for optimal dipeptidyl peptidase activity and T-cell costimulation. Found in a membrane raft complex, at least composed of BCL10, CARD11, DPP4 and IKBKB. Associates with collagen. Interacts with PTPRC; the interaction is enhanced in an interleukin-12-dependent manner in activated lymphocytes. Interacts (via extracellular domain) with ADA; does not inhibit its dipeptidyl peptidase activity. Interacts with CAV1 (via the N-terminus); the interaction is direct. Interacts (via cytoplasmic tail) with CARD11 (via PDZ domain); its homodimerization is necessary for interaction with CARD11. Interacts with IGF2R; the interaction is direct. Interacts with GPC3. Post-translationally, the soluble form (Dipeptidyl peptidase 4 soluble form also named SDPP) derives from the membrane form (Dipeptidyl peptidase 4 membrane form also named MDPP) by proteolytic processing. N- and O-Glycosylated. In terms of processing, phosphorylated. Mannose 6-phosphate residues in the carbohydrate moiety are necessary for interaction with IGF2R in activated T-cells. Mannose 6-phosphorylation is induced during T-cell activation. As to expression, expressed in bile ducts and other epithelial brush borders (small intestine, kidney, colon, pancreatic duct); acinar structures in salivary glands; endothelial structures and T cell areas in thymus, spleen and lymph node.

The protein localises to the secreted. The protein resides in the cell membrane. It is found in the apical cell membrane. It localises to the cell projection. Its subcellular location is the invadopodium membrane. The protein localises to the lamellipodium membrane. The protein resides in the cell junction. It is found in the membrane raft. It carries out the reaction Release of an N-terminal dipeptide, Xaa-Yaa-|-Zaa-, from a polypeptide, preferentially when Yaa is Pro, provided Zaa is neither Pro nor hydroxyproline.. Inhibited by GPC3 and diprotin A. Functionally, cell surface glycoprotein receptor involved in the costimulatory signal essential for T-cell receptor (TCR)-mediated T-cell activation. Acts as a positive regulator of T-cell coactivation, by binding at least ADA, CAV1, IGF2R, and PTPRC. Its binding to CAV1 and CARD11 induces T-cell proliferation and NF-kappa-B activation in a T-cell receptor/CD3-dependent manner. Its interaction with ADA also regulates lymphocyte-epithelial cell adhesion. In association with FAP is involved in the pericellular proteolysis of the extracellular matrix (ECM), the migration and invasion of endothelial cells into the ECM. May be involved in the promotion of lymphatic endothelial cells adhesion, migration and tube formation. When overexpressed, enhanced cell proliferation, a process inhibited by GPC3. Also acts as a serine exopeptidase with a dipeptidyl peptidase activity that regulates various physiological processes by cleaving peptides in the circulation, including many chemokines, mitogenic growth factors, neuropeptides and peptide hormones. Removes N-terminal dipeptides sequentially from polypeptides having unsubstituted N-termini provided that the penultimate residue is proline. In Rattus norvegicus (Rat), this protein is Dipeptidyl peptidase 4 (Dpp4).